Consider the following 412-residue polypeptide: Phosphoglycerate kinase (412 aa).

Substrate is bound by residues 26 to 28, arginine 42, 65 to 68, arginine 133, and arginine 166; these read DFN and HLGR. Residues lysine 217, glycine 308, glutamate 339, and 368 to 371 contribute to the ATP site; that span reads GGDS.

The protein belongs to the phosphoglycerate kinase family. In terms of assembly, monomer.

Its subcellular location is the cytoplasm. The catalysed reaction is (2R)-3-phosphoglycerate + ATP = (2R)-3-phospho-glyceroyl phosphate + ADP. It functions in the pathway carbohydrate degradation; glycolysis; pyruvate from D-glyceraldehyde 3-phosphate: step 2/5. This is Phosphoglycerate kinase from Synechococcus sp. (strain JA-3-3Ab) (Cyanobacteria bacterium Yellowstone A-Prime).